Reading from the N-terminus, the 816-residue chain is Lon protease (816 aa).

One can recognise a Lon N-terminal domain in the interval 40–244; the sequence is VPLIAVPSHP…KVLELLYEEL (205 aa). 398–405 contributes to the ATP binding site; the sequence is GPPGVGKT. The region spanning 636-816 is the Lon proteolytic domain; sequence AMSPGMVMGL…SMKEVIKLLF (181 aa). Active-site residues include Ser-724 and Lys-767.

This sequence belongs to the peptidase S16 family. In terms of assembly, homohexamer. Organized in a ring with a central cavity.

It is found in the cytoplasm. The enzyme catalyses Hydrolysis of proteins in presence of ATP.. In terms of biological role, ATP-dependent serine protease that mediates the selective degradation of mutant and abnormal proteins as well as certain short-lived regulatory proteins. Required for cellular homeostasis and for survival from DNA damage and developmental changes induced by stress. Degrades polypeptides processively to yield small peptide fragments that are 5 to 10 amino acids long. Binds to DNA in a double-stranded, site-specific manner. The polypeptide is Lon protease (Borrelia duttonii (strain Ly)).